We begin with the raw amino-acid sequence, 187 residues long: Ponticulin-like protein K (187 aa).

Residues methionine 1–serine 19 form the signal peptide. N-linked (GlcNAc...) asparagine glycosylation is found at asparagine 31, asparagine 70, asparagine 86, asparagine 93, asparagine 119, asparagine 128, asparagine 146, asparagine 160, and asparagine 161. Low complexity predominate over residues proline 115 to asparagine 146. Residues proline 115 to asparagine 161 are disordered. Residues glutamine 147–asparagine 161 show a composition bias toward polar residues. Asparagine 161 carries GPI-like-anchor amidated asparagine lipidation. A propeptide spans serine 162 to isoleucine 187 (removed in mature form).

Belongs to the ponticulin family. Post-translationally, the GPI-like-anchor contains a phosphoceramide group, rather than a phosphatidyl group.

It is found in the cell membrane. Its function is as follows. Binds F-actin and nucleates actin assembly. This is Ponticulin-like protein K (ponK) from Dictyostelium discoideum (Social amoeba).